We begin with the raw amino-acid sequence, 93 residues long: Small ribosomal subunit protein bS16 (93 aa).

This sequence belongs to the bacterial ribosomal protein bS16 family.

This chain is Small ribosomal subunit protein bS16, found in Dictyoglomus thermophilum (strain ATCC 35947 / DSM 3960 / H-6-12).